The chain runs to 193 residues: MARPKSEDKKQALLEAATQAIAQSGIAASTAVIARNAGVAEGTLFRYFATKDELINTLYLHLKQDLCQSMIMELDRSITDAKMMTRFIWNSYISWGLNHPARHRAIRQLAVSEKLTKETEQRADDMFPELRDLCHRSVLMVFMSDEYRAFGDGLFLALAETTMDFAARDPARAGEYIALGFEAMWRALTREEQ.

Residues 7–66 (EDKKQALLEAATQAIAQSGIAASTAVIARNAGVAEGTLFRYFATKDELINTLYLHLKQDL) enclose the HTH tetR-type domain. Positions 29-48 (STAVIARNAGVAEGTLFRYF) form a DNA-binding region, H-T-H motif.

As to quaternary structure, homodimer. May bind DNA either as a homodimer or as a pair of homodimers. Various chemicals reduce DNA-binding in vitro, including bile acids, such as cholic and chenodeoxycholic acids, and antimicrobial drugs, such as berberine, crystal violet, dequalinium, ethidium bromide and rhodamine 6G. Binds small regulatory RNA StyR3.

Its function is as follows. Transcriptional regulator. Represses the transcription of the transcriptional activator RamA and, thereby, leads to repression of the expression of the efflux pump subunits AcrA and AcrB, and TolC. Acts by binding directly to the promoter region of the ramA gene. Promoter binding may be inhibited partially by the small regulatory RNA StyR3, perhaps thereby ensuring a basal level of expression of RamA. This Salmonella typhimurium (strain LT2 / SGSC1412 / ATCC 700720) protein is Transcriptional regulator RamR.